Reading from the N-terminus, the 86-residue chain is U15-lycotoxin-Ls1g (86 aa).

The N-terminal stretch at 1–20 is a signal peptide; sequence MNSKIFAVLLLLGLLSCVLS. The 46-residue stretch at 21–66 folds into the WAP domain; that stretch reads DQYCPKSSITACKKMNIRNDCCKDDDCTGGSWCCATPCGNFCKYPA. 5 disulfide bridges follow: Cys24–Cys54, Cys32–Cys58, Cys41–Cys53, Cys42–Cys80, and Cys47–Cys62.

This sequence belongs to the venom protein 11 family. 01 (wap-1) subfamily. Post-translationally, contains 5 disulfide bonds. Expressed by the venom gland.

Its subcellular location is the secreted. Functionally, has antibacterial activity. In Lycosa singoriensis (Wolf spider), this protein is U15-lycotoxin-Ls1g.